Reading from the N-terminus, the 241-residue chain is Ribose-5-phosphate isomerase A (241 aa).

Substrate is bound by residues 28 to 31 (TGST), 83 to 86 (DGAD), and 96 to 99 (KGGG). E105 (proton acceptor) is an active-site residue. Substrate is bound at residue K123.

The protein belongs to the ribose 5-phosphate isomerase family. In terms of assembly, homodimer.

The enzyme catalyses aldehydo-D-ribose 5-phosphate = D-ribulose 5-phosphate. The protein operates within carbohydrate degradation; pentose phosphate pathway; D-ribose 5-phosphate from D-ribulose 5-phosphate (non-oxidative stage): step 1/1. In terms of biological role, catalyzes the reversible conversion of ribose-5-phosphate to ribulose 5-phosphate. This is Ribose-5-phosphate isomerase A from Rhodopseudomonas palustris (strain BisA53).